The following is a 1489-amino-acid chain: Calmodulin-regulated spectrin-associated protein 2 (1489 aa).

The region spanning 222 to 335 (WKLVPARYRK…FMAELFWWFE (114 aa)) is the Calponin-homology (CH) domain. The segment at 375 to 415 (SSDFPSSGEGATFTQSHHHLPSRYSRPQAHSSASGGIRRSS) is disordered. Residues 405-415 (SSASGGIRRSS) are compositionally biased toward low complexity. S416 and S418 each carry phosphoserine. T426 is modified (phosphothreonine). A phosphoserine mark is found at S464, S598, S599, S611, and S673. 2 disordered regions span residues 611–639 (SPITDNTEVDTGIHVPSEDIPETMDEDSS) and 668–730 (TREA…GSEL). A compositionally biased stretch (polar residues) spans 668-679 (TREALSPCPSTV). T678 bears the Phosphothreonine mark. Phosphoserine is present on S680. Over residues 680–699 (STKSQPGSSASSSSGVKMTS) the composition is skewed to low complexity. Basic and acidic residues predominate over residues 703-713 (QKFRKLNHTDG). Positions 756 to 793 (LLASEMVHLRMKLEEKRRAIEAQKKKMEAAFTKQRQKM) form a coiled coil. The segment at 812 to 844 (LREEAAGAEDEKVYTDRAKEKESQKTDGQRSKS) is disordered. S862 carries the phosphoserine modification. Residues 887 to 926 (EILEYTKSIEKLNSSLHFLQQEMQRLSLQQEMLMQMREQQ) adopt a coiled-coil conformation. The segment at 922-1034 (MREQQSWVIS…IQTRSFVCFG (113 aa)) is MBD region. The segment at 925–1017 (QQSWVISPPQ…SVDSLPRLRR (93 aa)) is disordered. A phosphoserine mark is found at S931 and S936. A compositionally biased stretch (polar residues) spans 960–989 (SSDSPRPTHPSPQSSNRKSASFSVKSQRTP). T997, T1002, and T1004 each carry phosphothreonine. A phosphoserine mark is found at S1008 and S1019. Disordered stretches follow at residues 1032–1078 (CFGD…PFES), 1096–1152 (PNED…DKEQ), and 1191–1349 (KETQ…EYTG). Positions 1039 to 1075 (PQLKESKPKEEVKKEELESKGTLEQRGHNPEEKEIKP) are enriched in basic and acidic residues. Over residues 1105–1117 (TEPPPKPVFPPTA) the composition is skewed to pro residues. 2 stretches are compositionally biased toward basic and acidic residues: residues 1132–1152 (KPPEKADVPVEKYDGESDKEQ) and 1191–1252 (KETQ…DTVI). S1148 is subject to Phosphoserine. Positions 1166–1238 (KDDQKAENDM…REFIRQEYMR (73 aa)) form a coiled coil. The segment covering 1287 to 1299 (SSLSLASLNTGDN) has biased composition (polar residues). A phosphoserine mark is found at S1313, S1319, and S1321. Polar residues predominate over residues 1334 to 1346 (NASTTSSVASGTE). Positions 1349–1483 (GPKLYKEPSA…QTKRPVTPKK (135 aa)) constitute a CKK domain.

It belongs to the CAMSAP1 family. As to quaternary structure, interacts with CAMSAP3. Interacts with KATNA1 and KATNB1; leading to regulate the length of CAMSAP2-decorated microtubule stretches. Interacts with a complex formed by AKAP9 and PDE4DIP isoform 13/MMG8/SMYLE, which recruits CAMSAP2 to the Golgi. Interacts with MAPRE1/EB1.

Its subcellular location is the cytoplasm. It is found in the cytoskeleton. The protein localises to the golgi apparatus. The protein resides in the cilium basal body. In terms of biological role, key microtubule-organizing protein that specifically binds the minus-end of non-centrosomal microtubules and regulates their dynamics and organization. Specifically recognizes growing microtubule minus-ends and autonomously decorates and stabilizes microtubule lattice formed by microtubule minus-end polymerization. Acts on free microtubule minus-ends that are not capped by microtubule-nucleating proteins or other factors and protects microtubule minus-ends from depolymerization. In addition, it also reduces the velocity of microtubule polymerization. Through the microtubule cytoskeleton, also regulates the organization of cellular organelles including the Golgi and the early endosomes. Essential for the tethering, but not for nucleation of non-centrosomal microtubules at the Golgi: together with Golgi-associated proteins AKAP9 and PDE4DIP, required to tether non-centrosomal minus-end microtubules to the Golgi, an important step for polarized cell movement. Also acts as a regulator of neuronal polarity and development: localizes to non-centrosomal microtubule minus-ends in neurons and stabilizes non-centrosomal microtubules, which is required for neuronal polarity, axon specification and dendritic branch formation. Through the microtubule cytoskeleton, regulates the autophagosome transport. The protein is Calmodulin-regulated spectrin-associated protein 2 of Homo sapiens (Human).